The sequence spans 198 residues: MTSQIKLIVGLGNPGPEYAKTRHNAGAWYVEQLARWHNVSLREEPKFFGHTARIQVDGQDVRLLIPNTYMNLSGKAVAALARFYQIEPEAMLVAHDELDLPPGIAKFKQGGGHGGHNGLKDIIARMGNNNNFFRLRLGIGHPGTKELVAGFVLTKAPSSEQSLIDAALDESLRATDILFKQDMTKAMNRLHSFKAEKV.

A tRNA-binding site is contributed by tyrosine 18. Histidine 23 acts as the Proton acceptor in catalysis. Tyrosine 69, asparagine 71, and asparagine 117 together coordinate tRNA.

It belongs to the PTH family. As to quaternary structure, monomer.

The protein resides in the cytoplasm. The enzyme catalyses an N-acyl-L-alpha-aminoacyl-tRNA + H2O = an N-acyl-L-amino acid + a tRNA + H(+). Hydrolyzes ribosome-free peptidyl-tRNAs (with 1 or more amino acids incorporated), which drop off the ribosome during protein synthesis, or as a result of ribosome stalling. Its function is as follows. Catalyzes the release of premature peptidyl moieties from peptidyl-tRNA molecules trapped in stalled 50S ribosomal subunits, and thus maintains levels of free tRNAs and 50S ribosomes. The protein is Peptidyl-tRNA hydrolase of Aeromonas hydrophila subsp. hydrophila (strain ATCC 7966 / DSM 30187 / BCRC 13018 / CCUG 14551 / JCM 1027 / KCTC 2358 / NCIMB 9240 / NCTC 8049).